We begin with the raw amino-acid sequence, 701 residues long: Elongation factor G 1 (701 aa).

Residues 8–290 enclose the tr-type G domain; sequence ERYRNIGISA…AVIDYLPSPL (283 aa). Residues 17–24, 88–92, and 142–145 each bind GTP; these read AHIDAGKT, DTPGH, and NKMD.

Belongs to the TRAFAC class translation factor GTPase superfamily. Classic translation factor GTPase family. EF-G/EF-2 subfamily.

The protein resides in the cytoplasm. Its function is as follows. Catalyzes the GTP-dependent ribosomal translocation step during translation elongation. During this step, the ribosome changes from the pre-translocational (PRE) to the post-translocational (POST) state as the newly formed A-site-bound peptidyl-tRNA and P-site-bound deacylated tRNA move to the P and E sites, respectively. Catalyzes the coordinated movement of the two tRNA molecules, the mRNA and conformational changes in the ribosome. This Paraburkholderia xenovorans (strain LB400) protein is Elongation factor G 1.